The chain runs to 861 residues: Leucine--tRNA ligase (861 aa).

A 'HIGH' region motif is present at residues 43–53 (PYPSGKLHMGH). The 'KMSKS' region signature appears at 588–592 (KMSKS). Lysine 591 provides a ligand contact to ATP.

This sequence belongs to the class-I aminoacyl-tRNA synthetase family.

Its subcellular location is the cytoplasm. The catalysed reaction is tRNA(Leu) + L-leucine + ATP = L-leucyl-tRNA(Leu) + AMP + diphosphate. The chain is Leucine--tRNA ligase from Symbiobacterium thermophilum (strain DSM 24528 / JCM 14929 / IAM 14863 / T).